A 481-amino-acid polypeptide reads, in one-letter code: Extracellular exo-alpha-(1-&gt;5)-L-arabinofuranosidase (481 aa).

The signal sequence occupies residues 1–27 (MRRLTVRLFTAVLAALALLTMGTPAHA). Residues 37–336 (FTNPLAEKRA…KVYWNADGTP (300 aa)) form a catalytic region. Catalysis depends on aspartate 47, which acts as the Proton acceptor. Asparagine 186 lines the substrate pocket. The active-site Proton donor is the glutamate 223. Residues histidine 287, arginine 321, 363–366 (HWDF), aspartate 379, 457–460 (HYEN), and aspartate 475 each bind substrate. Residues 349-479 (VRFSSYNYPD…ALDRQDATFY (131 aa)) are ABD.

It belongs to the glycosyl hydrolase 43 family.

Its subcellular location is the secreted. It catalyses the reaction Hydrolysis of terminal non-reducing alpha-L-arabinofuranoside residues in alpha-L-arabinosides.. Its pathway is glycan metabolism; L-arabinan degradation. Its function is as follows. Involved in the degradation of arabinan and is a key enzyme in the complete degradation of the plant cell wall. Catalyzes only the cleavage of terminal alpha-(1-&gt;5) arabinofuranosyl bonds of arabinan present in the arabinofuranosyl polysaccharides or oligosaccharides. It cannot act on other arabinose-containing polysaccharides and arabinoxylo-oligosaccharides. This Streptomyces avermitilis (strain ATCC 31267 / DSM 46492 / JCM 5070 / NBRC 14893 / NCIMB 12804 / NRRL 8165 / MA-4680) protein is Extracellular exo-alpha-(1-&gt;5)-L-arabinofuranosidase.